Reading from the N-terminus, the 555-residue chain is uncharacterized protein (555 aa).

Residues 1-83 (MSNEDETTRL…GRRKLLCLYG (83 aa)) lie on the Extracellular side of the membrane. Residues 84–104 (LVMIICIAESISMTATIPLVM) form a helical membrane-spanning segment. At 105 to 125 (DKVAEGISDENGHYDSVAVQT) the chain is on the cytoplasmic side. Residues 126–146 (IVSSISSSTMMIAGAISIFMA) traverse the membrane as a helical segment. Over 147-188 (GKWGELSDRIGRVRVFKYMSGIRVIGLLTHVFTLSSKMKYHK) the chain is Extracellular. Residues 189–209 (WAIVLTACIVPSFGGLFALVA) traverse the membrane as a helical segment. Residues 210–229 (NGNSYVSDIVKTEHRMVTIG) lie on the Cytoplasmic side of the membrane. The helical transmembrane segment at 230–250 (IMMSCIYATMGVGPMFGSFLV) threads the bilayer. Residues 251-257 (KWTHGNG) are Extracellular-facing. The helical transmembrane segment at 258–278 (FIPIYTSIAFVILALIICETI) threads the bilayer. At 279–356 (MVEPRHETQM…LVPRHTVILL (78 aa)) the chain is on the cytoplasmic side. The interval 289–311 (AHSQSTYTKRREKLRSQSGSDDA) is disordered. Residues 357 to 377 (IVLDILFVCGTTSCMPALILF) traverse the membrane as a helical segment. The Extracellular portion of the chain corresponds to 378 to 386 (STYEYKWHA). The chain crosses the membrane as a helical span at residues 387-407 (VELGYFISILGIGRGVVLLVV). Residues 408–428 (SPTLLYTLKRIYQHLNHSIDK) lie on the Cytoplasmic side of the membrane. The helical transmembrane segment at 429–449 (IDIFCIQFSMIVITLSLFVMI) threads the bilayer. Topologically, residues 450-459 (RFGEKTPTSM) are extracellular. The helical transmembrane segment at 460–480 (IIFALLQALSAFCSPTLQSGI) threads the bilayer. Over 481–491 (IKYTSKKHTGE) the chain is Cytoplasmic. Residues 492 to 512 (MFGAMALVRSCVMLVIPPILL) traverse the membrane as a helical segment. At 513 to 523 (KLYGSTVSVNP) the chain is on the extracellular side. Residues 524 to 544 (SLFMYIPFSTSIVAILLTFFL) form a helical membrane-spanning segment. Topologically, residues 545-555 (RIYKNPPLDGP) are cytoplasmic.

It localises to the membrane. This is an uncharacterized protein from Saccharomyces cerevisiae (strain ATCC 204508 / S288c) (Baker's yeast).